The primary structure comprises 232 residues: Ras association domain-containing protein 3 (232 aa).

Ser-2 bears the N-acetylserine mark. The tract at residues 25–46 is disordered; sequence RAPPGKSRSGQPDVEKEKETHN. The span at 37 to 46 shows a compositional bias: basic and acidic residues; sequence DVEKEKETHN. Residues 78-180 form the Ras-associating domain; the sequence is YTGFIKVQME…TLSFVLREHE (103 aa). The 48-residue stretch at 181–228 folds into the SARAH domain; sequence IGEWEAFSLPELQNFLRILDKEEDEQLQSLKRRYTAYRQKLEEALGEV.

The protein resides in the cytoplasm. It localises to the cytoskeleton. The chain is Ras association domain-containing protein 3 (Rassf3) from Mus musculus (Mouse).